The chain runs to 279 residues: HTH-type transcriptional regulator HdfR (279 aa).

The HTH lysR-type domain maps to 1-58 (MDTELLKTFLEVSRTRHFGRAAESLYLTQSAVSFRIRQLENQLGVNLFTRHRNNIRLT). The H-T-H motif DNA-binding region spans 18-37 (FGRAAESLYLTQSAVSFRIR).

The protein belongs to the LysR transcriptional regulatory family.

Its function is as follows. Negatively regulates the transcription of the flagellar master operon flhDC by binding to the upstream region of the operon. The protein is HTH-type transcriptional regulator HdfR of Escherichia coli (strain ATCC 8739 / DSM 1576 / NBRC 3972 / NCIMB 8545 / WDCM 00012 / Crooks).